A 340-amino-acid polypeptide reads, in one-letter code: DnaJ homolog subfamily C member 22 (340 aa).

The region spanning methionine 1–tryptophan 50 is the TM2 domain. 7 helical membrane passes run leucine 5 to leucine 25, histidine 30 to tryptophan 50, phenylalanine 81 to phenylalanine 101, phenylalanine 105 to glycine 125, leucine 135 to isoleucine 155, isoleucine 186 to serine 206, and valine 212 to leucine 232. A J domain is found at methionine 278 to leucine 340.

Its subcellular location is the membrane. In terms of biological role, may function as a co-chaperone. The protein is DnaJ homolog subfamily C member 22 (dnajc22) of Xenopus tropicalis (Western clawed frog).